A 367-amino-acid polypeptide reads, in one-letter code: Zinc metalloproteinase nas-22 (367 aa).

Residues 1 to 16 form the signal peptide; the sequence is MKSFFILLSILQECYG. The Peptidase M12A domain occupies 41–237; that stretch reads VLIRGSDEER…LMINKYYECS (197 aa). N-linked (GlcNAc...) asparagine glycans are attached at residues N56 and N85. Intrachain disulfides connect C88–C236, C111–C130, C238–C258, and C260–C269. H138 is a Zn(2+) binding site. E139 is an active-site residue. H142 and H148 together coordinate Zn(2+). 3 N-linked (GlcNAc...) asparagine glycosylation sites follow: N169, N241, and N254. The region spanning 232 to 270 is the EGF-like domain; the sequence is KYYECSCANNLSCKNHGYPNPSNCSQCNCPYGFGGADCS. Residues N287 and N322 are each glycosylated (N-linked (GlcNAc...) asparagine).

It depends on Zn(2+) as a cofactor. In terms of tissue distribution, expressed in uterine seam (utse) cell.

It localises to the secreted. Its function is as follows. Metalloprotease. The sequence is that of Zinc metalloproteinase nas-22 (nas-22) from Caenorhabditis elegans.